The chain runs to 482 residues: D-inositol 3-phosphate glycosyltransferase (482 aa).

A 1D-myo-inositol 3-phosphate-binding site is contributed by histidine 63. UDP-N-acetyl-alpha-D-glucosamine is bound by residues 69 to 70 and glycine 77; that span reads QP. 1D-myo-inositol 3-phosphate contacts are provided by residues 74 to 79, lysine 132, tyrosine 165, threonine 189, and arginine 209; that span reads DAGGMN. The UDP-N-acetyl-alpha-D-glucosamine site is built by arginine 289, lysine 294, and glutamine 355. Residues tyrosine 364, arginine 365, and alanine 367 each coordinate Mg(2+). The UDP-N-acetyl-alpha-D-glucosamine site is built by glutamate 377 and glutamate 385. Threonine 391 contributes to the Mg(2+) binding site.

It belongs to the glycosyltransferase group 1 family. MshA subfamily. Homodimer.

It catalyses the reaction 1D-myo-inositol 3-phosphate + UDP-N-acetyl-alpha-D-glucosamine = 1D-myo-inositol 2-acetamido-2-deoxy-alpha-D-glucopyranoside 3-phosphate + UDP + H(+). In terms of biological role, catalyzes the transfer of a N-acetyl-glucosamine moiety to 1D-myo-inositol 3-phosphate to produce 1D-myo-inositol 2-acetamido-2-deoxy-glucopyranoside 3-phosphate in the mycothiol biosynthesis pathway. The sequence is that of D-inositol 3-phosphate glycosyltransferase from Salinispora tropica (strain ATCC BAA-916 / DSM 44818 / JCM 13857 / NBRC 105044 / CNB-440).